A 359-amino-acid chain; its full sequence is Insulin gene enhancer protein isl-2a (359 aa).

LIM zinc-binding domains lie at 27 to 80 (CVGC…CKRD) and 30 to 143 (CGSQ…RADH). The interval 171–190 (EPVPVRQPPHRNHVHKQSEK) is disordered. The homeobox DNA-binding region spans 191-250 (TTRVRTVLNEKQLHTLRTCYNANPRPDALMKEQLVEMTGLSPRVIRVWFQNKRCKDKKKS). The segment covering 326 to 336 (ESGSLGNSSGS) has biased composition (low complexity). A disordered region spans residues 326–359 (ESGSLGNSSGSDVTSLSSQLPDTPNSMVPSPVET). Positions 337-359 (DVTSLSSQLPDTPNSMVPSPVET) are enriched in polar residues.

It localises to the nucleus. In terms of biological role, binds to one of the cis-acting domain of the insulin gene enhancer. May be involved in subtype specialization of primary motoneurons. The polypeptide is Insulin gene enhancer protein isl-2a (isl2a) (Danio rerio (Zebrafish)).